We begin with the raw amino-acid sequence, 100 residues long: Transcription and mRNA export factor SUS1 (100 aa).

Belongs to the ENY2 family. Component of the nuclear pore complex (NPC)-associated TREX-2 complex (transcription and export complex 2), composed of at least SUS1, SAC3, THP1, SEM1, and CDC31. TREX-2 contains 2 SUS1 chains. The TREX-2 complex interacts with the nucleoporin NUP1. Component of the 1.8 MDa SAGA transcription coactivator-HAT complex. SAGA is built of 5 distinct domains with specialized functions. Within the SAGA complex, SUS1, SGF11, SGF73 and UBP8 form an additional subcomplex of SAGA called the DUB module (deubiquitination module). Interacts directly with THP1, SAC3, SGF11, and with the RNA polymerase II.

The protein resides in the nucleus. Its subcellular location is the nucleoplasm. It localises to the cytoplasm. The protein localises to the P-body. In terms of biological role, involved in mRNA export coupled transcription activation by association with both the TREX-2 and the SAGA complexes. At the promoters, SAGA is required for recruitment of the basal transcription machinery. It influences RNA polymerase II transcriptional activity through different activities such as TBP interaction and promoter selectivity, interaction with transcription activators, and chromatin modification through histone acetylation and deubiquitination. Within the SAGA complex, participates in a subcomplex required for deubiquitination of H2B and for the maintenance of steady-state H3 methylation levels. The TREX-2 complex functions in docking export-competent ribonucleoprotein particles (mRNPs) to the nuclear entrance of the nuclear pore complex (nuclear basket). TREX-2 participates in mRNA export and accurate chromatin positioning in the nucleus by tethering genes to the nuclear periphery. May also be involved in cytoplasmic mRNA decay by interaction with components of P-bodies. The chain is Transcription and mRNA export factor SUS1 from Cryptococcus neoformans var. neoformans serotype D (strain B-3501A) (Filobasidiella neoformans).